The sequence spans 1419 residues: L-2-aminoadipate reductase (1419 aa).

The 77-residue stretch at 880 to 956 (ETLTATERDI…GLAKEIERMK (77 aa)) folds into the Carrier domain. Serine 916 carries the O-(pantetheine 4'-phosphoryl)serine modification.

Belongs to the ATP-dependent AMP-binding enzyme family. The cofactor is pantetheine 4'-phosphate.

The protein localises to the cytoplasm. It catalyses the reaction (S)-2-amino-6-oxohexanoate + NADP(+) + H2O = L-2-aminoadipate + NADPH + 2 H(+). The catalysed reaction is (S)-2-amino-6-oxohexanoate + NAD(+) + H2O = L-2-aminoadipate + NADH + 2 H(+). The enzyme catalyses (S)-2-amino-6-oxohexanoate + AMP + diphosphate + NADP(+) = L-2-aminoadipate + ATP + NADPH + H(+). It participates in amino-acid biosynthesis; L-lysine biosynthesis via AAA pathway; L-lysine from L-alpha-aminoadipate (fungal route): step 1/3. Catalyzes the activation of alpha-aminoadipate by ATP-dependent adenylation and the reduction of activated alpha-aminoadipate by NADPH. The activated alpha-aminoadipate is bound to the phosphopantheinyl group of the enzyme itself before it is reduced to (S)-2-amino-6-oxohexanoate. This Schizosaccharomyces pombe (strain 972 / ATCC 24843) (Fission yeast) protein is L-2-aminoadipate reductase (lys1).